The sequence spans 315 residues: Ribosomal RNA small subunit methyltransferase H (315 aa).

S-adenosyl-L-methionine-binding positions include 37–39, Asp-57, Leu-91, Asp-105, and Gln-112; that span reads GGH.

This sequence belongs to the methyltransferase superfamily. RsmH family.

It localises to the cytoplasm. It carries out the reaction cytidine(1402) in 16S rRNA + S-adenosyl-L-methionine = N(4)-methylcytidine(1402) in 16S rRNA + S-adenosyl-L-homocysteine + H(+). Specifically methylates the N4 position of cytidine in position 1402 (C1402) of 16S rRNA. In Syntrophus aciditrophicus (strain SB), this protein is Ribosomal RNA small subunit methyltransferase H.